The sequence spans 257 residues: ATP synthase delta chain, chloroplastic (257 aa).

The N-terminal 70 residues, 1 to 70 (MAALQNPVAL…PRGGALGTRM (70 aa)), are a transit peptide targeting the chloroplast.

The protein belongs to the ATPase delta chain family. F-type ATPases have 2 components, CF(1) - the catalytic core - and CF(0) - the membrane proton channel. CF(1) has five subunits: alpha(3), beta(3), gamma(1), delta(1), epsilon(1). CF(0) has three main subunits: a, b and c.

The protein localises to the plastid. The protein resides in the chloroplast thylakoid membrane. This protein seems to be part of the stalk that links CF(0) to CF(1). It either transmits conformational changes from CF(0) into CF(1) or is implicated in proton conduction. This chain is ATP synthase delta chain, chloroplastic (ATPD), found in Spinacia oleracea (Spinach).